Here is a 754-residue protein sequence, read N- to C-terminus: Gelsolin, cytoplasmic (754 aa).

The segment at 1-120 is actin-severing; it reads MVPAFEGAGA…RYLKGGVASG (120 aa). One copy of the Gelsolin-like 1 repeat lies at 22-71; sequence FEVVPYPKEKYGQFYQGDSYIVLYTRDVNGNLSWDLHFWLGSETSQDEAG. The actin-actin interfilament contact point stretch occupies residues 68–71; sequence DEAG. A 1,2-diacyl-sn-glycero-3-phospho-(1D-myo-inositol-4,5-bisphosphate)-binding positions include 101-108 and 133-141; these read LFLSRFKK and RLFHVKGRR. The Gelsolin-like 2 repeat unit spans residues 143–183; it reads IRIRQVEVGVGSMNKGDCFILDCGSQVYAYMGPSSRKMDRL. The segment at 209 to 238 is disordered; that stretch reads TASGSEAGESSPGLGGGSPDDVADEDTGVD. Over residues 210-220 the composition is skewed to low complexity; that stretch reads ASGSEAGESSP. 4 Gelsolin-like repeats span residues 266–306, 414–463, 538–580, and 643–684; these read NMIG…KEKV, LKLE…DEKA, FDTR…EEKA, and LRVN…QEKE. The tract at residues 386–751 is actin-binding, Ca-sensitive; that stretch reads LLQKNAGPAF…MKAQVPETNA (366 aa). Ca(2+) contacts are provided by glycine 430, aspartate 431, glutamate 461, aspartate 556, glutamate 578, aspartate 659, aspartate 660, and glutamate 682.

This sequence belongs to the villin/gelsolin family. In terms of tissue distribution, tail muscle.

The protein localises to the cytoplasm. It localises to the cytoskeleton. Its function is as follows. Calcium-regulated, actin-modulating protein that binds to the plus (or barbed) ends of actin monomers or filaments, preventing monomer exchange (end-blocking or capping). It can promote the assembly of monomers into filaments (nucleation) as well as sever filaments already formed. This chain is Gelsolin, cytoplasmic, found in Homarus americanus (American lobster).